Here is a 603-residue protein sequence, read N- to C-terminus: Elongation factor 4 (603 aa).

The tr-type G domain occupies 7 to 189 (VRIRNFCIIA…AVVERVPPPP (183 aa)). GTP-binding positions include 19-24 (DHGKST) and 136-139 (NKID).

It belongs to the TRAFAC class translation factor GTPase superfamily. Classic translation factor GTPase family. LepA subfamily.

Its subcellular location is the cell inner membrane. The enzyme catalyses GTP + H2O = GDP + phosphate + H(+). Required for accurate and efficient protein synthesis under certain stress conditions. May act as a fidelity factor of the translation reaction, by catalyzing a one-codon backward translocation of tRNAs on improperly translocated ribosomes. Back-translocation proceeds from a post-translocation (POST) complex to a pre-translocation (PRE) complex, thus giving elongation factor G a second chance to translocate the tRNAs correctly. Binds to ribosomes in a GTP-dependent manner. The chain is Elongation factor 4 from Nostoc sp. (strain PCC 7120 / SAG 25.82 / UTEX 2576).